Here is a 480-residue protein sequence, read N- to C-terminus: G-rich sequence factor 1 (480 aa).

The N-terminal 117 residues, Met-1–Tyr-117, are a transit peptide targeting the mitochondrion. 2 consecutive RRM domains span residues Lys-122 to Val-246 and Gly-250 to Arg-326. Ser-244 is subject to Phosphoserine. Residue Ser-335 is modified to Phosphoserine. Positions His-401 to Lys-480 constitute an RRM 3 domain.

In terms of assembly, monomer. Found in a complex with DDX28, DHX30, FASTKD2 and FASTKD5. Interacts with the mitochondrial RNase P complex subunit TRMT10C/MRPP1. Interacts with the 2 components of the mitochondrial degradosome complex, PNPT1 and SUPV3L1, in an RNA-dependent manner.

The protein resides in the mitochondrion matrix. The protein localises to the cytoplasm. In terms of biological role, regulator of post-transcriptional mitochondrial gene expression, required for assembly of the mitochondrial ribosome and for recruitment of mRNA and lncRNA. Binds RNAs containing the 14 base G-rich element. Preferentially binds RNAs transcribed from three contiguous genes on the light strand of mtDNA, the ND6 mRNA, and the long non-coding RNAs for MT-CYB and MT-ND5, each of which contains multiple consensus binding sequences. Involved in the degradosome-mediated decay of non-coding mitochondrial transcripts (MT-ncRNA) and tRNA-like molecules. Acts by unwinding G-quadruplex RNA structures in MT-ncRNA, thus facilitating their degradation by the degradosome. G-quadruplexes (G4) are non-canonical 4 stranded structures formed by transcripts from the light strand of mtDNA. The protein is G-rich sequence factor 1 (GRSF1) of Homo sapiens (Human).